Here is a 233-residue protein sequence, read N- to C-terminus: Large ribosomal subunit protein uL1 (233 aa).

This sequence belongs to the universal ribosomal protein uL1 family. In terms of assembly, part of the 50S ribosomal subunit.

In terms of biological role, binds directly to 23S rRNA. The L1 stalk is quite mobile in the ribosome, and is involved in E site tRNA release. Protein L1 is also a translational repressor protein, it controls the translation of the L11 operon by binding to its mRNA. This is Large ribosomal subunit protein uL1 from Deinococcus deserti (strain DSM 17065 / CIP 109153 / LMG 22923 / VCD115).